We begin with the raw amino-acid sequence, 551 residues long: DEAD-box ATP-dependent RNA helicase 47, mitochondrial (551 aa).

A mitochondrion-targeting transit peptide spans 1 to 29 (MAASTSTRFLVLLKDFSAFRKISWTCAAT). Positions 110–138 (KSFEELGLPDSLLDSLEREGFSVPTDVQS) match the Q motif motif. The Helicase ATP-binding domain maps to 141-340 (VPAIIKGHDA…KSWSHEPVLV (200 aa)). 154 to 161 (SYTGSGKT) contacts ATP. A DEAD box motif is present at residues 274–277 (DEVD). Positions 397-548 (TLRRCVHALD…ELVVTEEDKA (152 aa)) constitute a Helicase C-terminal domain.

The protein belongs to the DEAD box helicase family. Mostly expressed in leaves and flowers, and, to a lower extent, in roots, seedlings and siliques, especially in meristematic regions.

It localises to the mitochondrion. The catalysed reaction is ATP + H2O = ADP + phosphate + H(+). Essential protein required during embryogenesis. Required for mitochondrial metabolism. Necessary for normal plasmodesmata (PD) development and aperture regulation. This chain is DEAD-box ATP-dependent RNA helicase 47, mitochondrial (RH47), found in Arabidopsis thaliana (Mouse-ear cress).